The primary structure comprises 938 residues: Protein translocase subunit SecA (938 aa).

Residues glutamine 90, glycine 108 to threonine 112, and aspartate 504 each bind ATP.

The protein belongs to the SecA family. In terms of assembly, monomer and homodimer. Part of the essential Sec protein translocation apparatus which comprises SecA, SecYEG and auxiliary proteins SecDF. Other proteins may also be involved.

The protein resides in the cell inner membrane. Its subcellular location is the cellular thylakoid membrane. It is found in the cytoplasm. The catalysed reaction is ATP + H2O + cellular proteinSide 1 = ADP + phosphate + cellular proteinSide 2.. In terms of biological role, part of the Sec protein translocase complex. Interacts with the SecYEG preprotein conducting channel. Has a central role in coupling the hydrolysis of ATP to the transfer of proteins into and across the cell membrane, serving as an ATP-driven molecular motor driving the stepwise translocation of polypeptide chains across the membrane. Functionally, probably participates in protein translocation into and across both the cytoplasmic and thylakoid membranes in cyanobacterial cells. The chain is Protein translocase subunit SecA from Microcystis aeruginosa (strain NIES-843 / IAM M-2473).